A 514-amino-acid polypeptide reads, in one-letter code: Embryonic protein UVS.2 (514 aa).

The N-terminal stretch at 1–19 (MDVKISAILLACIIQYAVS) is a signal peptide. In terms of domain architecture, Peptidase M12A spans 90–286 (SAINDARFLW…SKINKLYECN (197 aa)). An N-linked (GlcNAc...) asparagine glycan is attached at Asn112. Cystine bridges form between Cys137–Cys285, Cys158–Cys178, Cys288–Cys314, Cys340–Cys363, Cys402–Cys428, and Cys455–Cys475. Zn(2+) is bound at residue His186. Glu187 is an active-site residue. Residues His190 and His196 each contribute to the Zn(2+) site. The N-linked (GlcNAc...) asparagine glycan is linked to Asn199. CUB domains lie at 288 to 400 (CSNL…YGSI) and 402 to 513 (CGGA…YTFV). Asn421, Asn427, and Asn464 each carry an N-linked (GlcNAc...) asparagine glycan.

It depends on Zn(2+) as a cofactor.

This is Embryonic protein UVS.2 from Xenopus laevis (African clawed frog).